Here is a 398-residue protein sequence, read N- to C-terminus: MELVKGNIASPKGFYADGKHAGLKRKRNDIGWIYSEVPANAAAVYTMNQMQAAPIFVTKDSFQSNAKLQAIIVNSGNANACTGNQGMLDALAMRAQTAEKLDIPLDYVAVASTGIIGDMLPMDKINAGIEMLEKQTGNAADFEEAILTTDTFQKQISFQTEIGGRKVTMSGVAKGSGMIHPNMATMLAFITTDAAIPAELLQKLLKIKVDKTFNQITVDGDTSTNDMVVVMANGCAENPMLQEGTADFAKFADMFQAVMEHLAKSIARDGEGATKLIEVQVNGATKTEDARMIAKKIVSSSLVKTAAFGGDGNWGRIICAIGYSGGRFAPDNITIKIGGIEILNHSSQTIFNQQALDAYLEEEHIIIDVDLHIGLESGTAWGCDLSYEYVKINACYRT.

6 residues coordinate substrate: threonine 148, lysine 174, threonine 185, glutamate 271, asparagine 393, and threonine 398. Threonine 185 (nucleophile) is an active-site residue.

Belongs to the ArgJ family. In terms of assembly, heterotetramer of two alpha and two beta chains.

It is found in the cytoplasm. It carries out the reaction N(2)-acetyl-L-ornithine + L-glutamate = N-acetyl-L-glutamate + L-ornithine. It catalyses the reaction L-glutamate + acetyl-CoA = N-acetyl-L-glutamate + CoA + H(+). It functions in the pathway amino-acid biosynthesis; L-arginine biosynthesis; L-ornithine and N-acetyl-L-glutamate from L-glutamate and N(2)-acetyl-L-ornithine (cyclic): step 1/1. It participates in amino-acid biosynthesis; L-arginine biosynthesis; N(2)-acetyl-L-ornithine from L-glutamate: step 1/4. In terms of biological role, catalyzes two activities which are involved in the cyclic version of arginine biosynthesis: the synthesis of N-acetylglutamate from glutamate and acetyl-CoA as the acetyl donor, and of ornithine by transacetylation between N(2)-acetylornithine and glutamate. The polypeptide is Arginine biosynthesis bifunctional protein ArgJ (Listeria monocytogenes serotype 4b (strain F2365)).